A 232-amino-acid chain; its full sequence is Uracil-DNA glycosylase (232 aa).

Catalysis depends on aspartate 70, which acts as the Proton acceptor.

Belongs to the uracil-DNA glycosylase (UDG) superfamily. UNG family.

The protein resides in the cytoplasm. It carries out the reaction Hydrolyzes single-stranded DNA or mismatched double-stranded DNA and polynucleotides, releasing free uracil.. Functionally, excises uracil residues from the DNA which can arise as a result of misincorporation of dUMP residues by DNA polymerase or due to deamination of cytosine. The chain is Uracil-DNA glycosylase from Campylobacter fetus subsp. fetus (strain 82-40).